The sequence spans 566 residues: Urease subunit alpha (566 aa).

The Urease domain maps to 128–566 (GGIDTHIHFI…LPMAQRYFLF (439 aa)). Residues H133, H135, and K216 each coordinate Ni(2+). K216 carries the post-translational modification N6-carboxylysine. H218 is a binding site for substrate. Residues H245 and H271 each coordinate Ni(2+). Residue H319 is the Proton donor of the active site. D359 is a binding site for Ni(2+).

The protein belongs to the metallo-dependent hydrolases superfamily. Urease alpha subunit family. As to quaternary structure, heterotrimer of UreA (gamma), UreB (beta) and UreC (alpha) subunits. Three heterotrimers associate to form the active enzyme. Ni cation serves as cofactor. Post-translationally, carboxylation allows a single lysine to coordinate two nickel ions.

The protein localises to the cytoplasm. The catalysed reaction is urea + 2 H2O + H(+) = hydrogencarbonate + 2 NH4(+). The protein operates within nitrogen metabolism; urea degradation; CO(2) and NH(3) from urea (urease route): step 1/1. This is Urease subunit alpha from Pseudomonas fluorescens (strain Pf0-1).